The sequence spans 202 residues: Imidazole glycerol phosphate synthase subunit HisH 2 (202 aa).

The region spanning 1–202 (MIAIIDYGMG…KLMENFIKQA (202 aa)) is the Glutamine amidotransferase type-1 domain. Cysteine 80 acts as the Nucleophile in catalysis. Active-site residues include histidine 183 and glutamate 185.

As to quaternary structure, heterodimer of HisH and HisF.

The protein localises to the cytoplasm. It carries out the reaction 5-[(5-phospho-1-deoxy-D-ribulos-1-ylimino)methylamino]-1-(5-phospho-beta-D-ribosyl)imidazole-4-carboxamide + L-glutamine = D-erythro-1-(imidazol-4-yl)glycerol 3-phosphate + 5-amino-1-(5-phospho-beta-D-ribosyl)imidazole-4-carboxamide + L-glutamate + H(+). The catalysed reaction is L-glutamine + H2O = L-glutamate + NH4(+). Its pathway is amino-acid biosynthesis; L-histidine biosynthesis; L-histidine from 5-phospho-alpha-D-ribose 1-diphosphate: step 5/9. IGPS catalyzes the conversion of PRFAR and glutamine to IGP, AICAR and glutamate. The HisH subunit provides the glutamine amidotransferase activity that produces the ammonia necessary to HisF for the synthesis of IGP and AICAR. The chain is Imidazole glycerol phosphate synthase subunit HisH 2 (hisH2) from Methanococcus maripaludis (strain DSM 14266 / JCM 13030 / NBRC 101832 / S2 / LL).